A 304-amino-acid polypeptide reads, in one-letter code: Cell surface-binding protein OPG105 (304 aa).

The 235-residue stretch at 1–235 (MPQQLSPINI…NDDTQVYYSG (235 aa)) folds into the Alpha-carbonic anhydrase domain. Over 1-275 (MPQQLSPINI…YQKYIEGNKT (275 aa)) the chain is Virion surface. The helical transmembrane segment at 276–294 (FAIIAIVFVFILTAILFLM) threads the bilayer. The Intravirion segment spans residues 295-304 (SRRYSREKQN).

The protein belongs to the alpha-carbonic anhydrase family. As to quaternary structure, homodimer; disulfide-linked. In terms of processing, apparently non-glycosylated.

It is found in the virion membrane. Functionally, binds to chondroitin sulfate on the cell surface to provide virion attachment to target cell. The chain is Cell surface-binding protein OPG105 (OPG105) from Vaccinia virus (strain Copenhagen) (VACV).